A 433-amino-acid polypeptide reads, in one-letter code: GTPase Obg (433 aa).

Residues 1 to 159 (MKFVDSADLI…FEIRAELKVL (159 aa)) form the Obg domain. The 173-residue stretch at 160-332 (ADVGFVGLPN…LLFMIYEELK (173 aa)) folds into the OBG-type G domain. GTP contacts are provided by residues 166 to 173 (GLPNAGKS), 191 to 195 (FTTIN), 213 to 216 (DLPG), 284 to 287 (NKMD), and 313 to 315 (SGL). S173 and T193 together coordinate Mg(2+). An OCT domain is found at 355–433 (KFEEQKEDIQ…VFDYELEWTD (79 aa)).

The protein belongs to the TRAFAC class OBG-HflX-like GTPase superfamily. OBG GTPase family. Monomer. Requires Mg(2+) as cofactor.

The protein resides in the cytoplasm. In terms of biological role, an essential GTPase which binds GTP, GDP and possibly (p)ppGpp with moderate affinity, with high nucleotide exchange rates and a fairly low GTP hydrolysis rate. Plays a role in control of the cell cycle, stress response, ribosome biogenesis and in those bacteria that undergo differentiation, in morphogenesis control. The chain is GTPase Obg from Mycoplasma capricolum subsp. capricolum (strain California kid / ATCC 27343 / NCTC 10154).